A 470-amino-acid chain; its full sequence is Cannabinoid receptor type 1B (470 aa).

Over 1 to 113 the chain is Extracellular; sequence MKLALHRIAG…CFMILTPAQQ (113 aa). N-linked (GlcNAc...) asparagine glycans are attached at residues Asn78 and Asn86. The chain crosses the membrane as a helical span at residues 114 to 139; it reads LVIVILAITLGTFTVLENFVVLCVIL. Topologically, residues 140 to 151 are cytoplasmic; that stretch reads HSHTLRSRPSYH. Residues 152-172 form a helical membrane-spanning segment; the sequence is FIGSLAVADLIGSIIFVYSFL. The Extracellular segment spans residues 173-184; it reads DFHVLHRKDSPS. Residues 185 to 209 form a helical membrane-spanning segment; it reads IFLFKLAGVIASFTASVGSLFLTAI. Over 210–229 the chain is Cytoplasmic; that stretch reads DRYVSIHRPMAYKRIITKTK. A helical membrane pass occupies residues 230–252; the sequence is AVIAFSVMWAISIEFSLLPLLGW. Topologically, residues 253 to 270 are extracellular; it reads NCKRLHSVCSDIFPLIDE. Residues 271–296 form a helical membrane-spanning segment; sequence KYLMFWIGMTTVLLLFIIYAYMFILW. Topologically, residues 297-341 are cytoplasmic; that stretch reads KSHHHAVRMLSRSSQRSIIVYTSEGTKVQTVRPEQARMDLRLAKT. A helical membrane pass occupies residues 342-362; it reads LVLILVALIICWGPLLAIMVY. Topologically, residues 363-374 are extracellular; the sequence is DLFGRVNDFIKT. Residues 375–396 form a helical membrane-spanning segment; sequence VFAFCSMLCLLNSTINPVIYAM. At 397-470 the chain is on the cytoplasmic side; the sequence is RSKDLRRAFV…VTASSPAEAV (74 aa). Residue Cys412 is the site of S-palmitoyl cysteine attachment. The segment covering 418–434 has biased composition (polar residues); it reads SLDSSAESDWNSRSVRS. Residues 418-450 are disordered; it reads SLDSSAESDWNSRSVRSTGGRAGKDRSVGGKPQ.

The protein belongs to the G-protein coupled receptor 1 family. Palmitoylation at Cys-412 is important for recruitment at both plasma membrane and lipid rafts and association with G protein alpha subunits.

It localises to the cell membrane. The protein resides in the mitochondrion outer membrane. It is found in the cell projection. Its subcellular location is the axon. The protein localises to the presynapse. Its function is as follows. G-protein coupled receptor for cannabinoids. Mediates many cannabinoid-induced effects in the central nervous system (CNS), as well as in peripheral tissues. Regulates cellular respiration and energy production in response to cannabinoids. Signaling typically involves reduction in cyclic AMP. In Takifugu rubripes (Japanese pufferfish), this protein is Cannabinoid receptor type 1B (cnr1b).